The sequence spans 66 residues: Large ribosomal subunit protein bL33c (66 aa).

Belongs to the bacterial ribosomal protein bL33 family.

The protein resides in the plastid. It is found in the chloroplast. This chain is Large ribosomal subunit protein bL33c, found in Cicer arietinum (Chickpea).